A 60-amino-acid chain; its full sequence is UPF0434 protein mma_2578 (60 aa).

This sequence belongs to the UPF0434 family.

This Janthinobacterium sp. (strain Marseille) (Minibacterium massiliensis) protein is UPF0434 protein mma_2578.